Here is a 444-residue protein sequence, read N- to C-terminus: Methylenetetrahydrofolate--tRNA-(uracil-5-)-methyltransferase TrmFO (444 aa).

10-15 lines the FAD pocket; that stretch reads GAGLAG.

Belongs to the MnmG family. TrmFO subfamily. FAD serves as cofactor.

Its subcellular location is the cytoplasm. It catalyses the reaction uridine(54) in tRNA + (6R)-5,10-methylene-5,6,7,8-tetrahydrofolate + NADH + H(+) = 5-methyluridine(54) in tRNA + (6S)-5,6,7,8-tetrahydrofolate + NAD(+). The enzyme catalyses uridine(54) in tRNA + (6R)-5,10-methylene-5,6,7,8-tetrahydrofolate + NADPH + H(+) = 5-methyluridine(54) in tRNA + (6S)-5,6,7,8-tetrahydrofolate + NADP(+). Its function is as follows. Catalyzes the folate-dependent formation of 5-methyl-uridine at position 54 (M-5-U54) in all tRNAs. The sequence is that of Methylenetetrahydrofolate--tRNA-(uracil-5-)-methyltransferase TrmFO from Streptococcus sanguinis (strain SK36).